A 368-amino-acid chain; its full sequence is Alanine racemase (368 aa).

Residue K40 is the Proton acceptor; specific for D-alanine of the active site. K40 is subject to N6-(pyridoxal phosphate)lysine. Residue R136 participates in substrate binding. Catalysis depends on Y263, which acts as the Proton acceptor; specific for L-alanine. M310 is a binding site for substrate.

The protein belongs to the alanine racemase family. Pyridoxal 5'-phosphate is required as a cofactor.

The catalysed reaction is L-alanine = D-alanine. The protein operates within amino-acid biosynthesis; D-alanine biosynthesis; D-alanine from L-alanine: step 1/1. Its function is as follows. Catalyzes the interconversion of L-alanine and D-alanine. May also act on other amino acids. The protein is Alanine racemase (alr) of Streptococcus gordonii (strain Challis / ATCC 35105 / BCRC 15272 / CH1 / DL1 / V288).